A 390-amino-acid polypeptide reads, in one-letter code: Zinc transporter 8 (390 aa).

The signal sequence occupies residues 1–25; sequence MRTNTTATVLLAAAVALLLATAARG. Residue N4 is glycosylated (N-linked (GlcNAc...) asparagine). The Extracellular portion of the chain corresponds to 26 to 50; sequence DGGDGGCGKEDAAAGRDRARARGLK. Residues 51-71 form a helical membrane-spanning segment; sequence IAAFFSILVCGALGCGLPSLG. Residues 72–82 are Cytoplasmic-facing; the sequence is RHVPALRPDGD. Residues 83 to 103 traverse the membrane as a helical segment; the sequence is VFFLVKAFAAGVILATGFIHI. The Extracellular portion of the chain corresponds to 104–124; it reads LPDAFDNLTDDCLPAGGPWKE. Residue N110 is glycosylated (N-linked (GlcNAc...) asparagine). Residues 125–145 traverse the membrane as a helical segment; that stretch reads FPFAGFGAMVGAIGTLVVDTL. At 146 to 235 the chain is on the cytoplasmic side; sequence ATGYFTRALS…DDKETTLRHR (90 aa). Residues 165-199 are disordered; that stretch reads VADEEKQSAAATQQHNHHHNHHVVGDGGGGGEEHE. The chain crosses the membrane as a helical span at residues 236-256; it reads VISQVLELGIVVHSVIIGISL. Residues 257–267 lie on the Extracellular side of the membrane; that stretch reads GASQNPETIKP. The helical transmembrane segment at 268 to 288 threads the bilayer; that stretch reads LVVALSFHQMFEGMGLGGCIV. Over 289–296 the chain is Cytoplasmic; the sequence is QAKFKVRS. A helical transmembrane segment spans residues 297-317; the sequence is IVTMVLFFCLTTPVGIAVGVG. The Extracellular segment spans residues 318–329; the sequence is ISSVYNESSPTA. The N-linked (GlcNAc...) asparagine glycan is linked to N323. Residues 330–350 form a helical membrane-spanning segment; that stretch reads LVVEGILNSVAAGILIYMALV. The Cytoplasmic segment spans residues 351-369; that stretch reads DLLAEDFMNPRVQSKGKLQ. A helical membrane pass occupies residues 370-390; it reads LGINLAMLAGAGLMSMLAKWA.

Belongs to the ZIP transporter (TC 2.A.5) family.

Its subcellular location is the cell membrane. Functionally, zinc transporter that may mediate zinc uptake from the rhizosphere and may be responsible for the translocation of zinc within the plant. This Oryza sativa subsp. japonica (Rice) protein is Zinc transporter 8 (ZIP8).